The chain runs to 232 residues: 5'-methylthioadenosine/S-adenosylhomocysteine nucleosidase (232 aa).

The Proton acceptor role is filled by glutamate 14. Residues glycine 80, valine 154, and 175–176 each bind substrate; that span reads ME. Catalysis depends on aspartate 199, which acts as the Proton donor.

It belongs to the PNP/UDP phosphorylase family. MtnN subfamily.

The catalysed reaction is S-adenosyl-L-homocysteine + H2O = S-(5-deoxy-D-ribos-5-yl)-L-homocysteine + adenine. It carries out the reaction S-methyl-5'-thioadenosine + H2O = 5-(methylsulfanyl)-D-ribose + adenine. It catalyses the reaction 5'-deoxyadenosine + H2O = 5-deoxy-D-ribose + adenine. Its pathway is amino-acid biosynthesis; L-methionine biosynthesis via salvage pathway; S-methyl-5-thio-alpha-D-ribose 1-phosphate from S-methyl-5'-thioadenosine (hydrolase route): step 1/2. Its function is as follows. Catalyzes the irreversible cleavage of the glycosidic bond in both 5'-methylthioadenosine (MTA) and S-adenosylhomocysteine (SAH/AdoHcy) to adenine and the corresponding thioribose, 5'-methylthioribose and S-ribosylhomocysteine, respectively. Also cleaves 5'-deoxyadenosine, a toxic by-product of radical S-adenosylmethionine (SAM) enzymes, into 5-deoxyribose and adenine. This Actinobacillus pleuropneumoniae serotype 3 (strain JL03) protein is 5'-methylthioadenosine/S-adenosylhomocysteine nucleosidase.